Consider the following 147-residue polypeptide: Hemoglobin subunit beta (147 aa).

V2 carries the post-translational modification N-acetylvaline. The 145-residue stretch at 3-147 (HLTGEEKAAV…VANALAHKYH (145 aa)) folds into the Globin domain. T13 is subject to Phosphothreonine. Position 45 is a phosphoserine (S45). K60 carries the post-translational modification N6-acetyllysine. Position 64 (H64) interacts with heme b. K83 bears the N6-acetyllysine mark. Residue H93 participates in heme b binding. An S-nitrosocysteine modification is found at C94. K145 carries the post-translational modification N6-acetyllysine.

This sequence belongs to the globin family. Heterotetramer of two alpha chains and two beta chains. As to expression, red blood cells.

Involved in oxygen transport from the lung to the various peripheral tissues. The polypeptide is Hemoglobin subunit beta (HBB) (Cheracebus torquatus (Collared titi monkey)).